We begin with the raw amino-acid sequence, 966 residues long: Next to BRCA1 gene 1 protein (966 aa).

In terms of domain architecture, PB1 spans 4 to 85 (QVTLNVTFKN…NQLQMQVHEG (82 aa)). The residue at position 116 (Ser-116) is a Phosphoserine. A ZZ-type zinc finger spans residues 212 to 264 (SWHIACNNCQRRIVGVRYQCSLCPSYNICEDCEAGPYGHDTNHVLLKLRRPVV). Zn(2+) contacts are provided by Cys-217, Cys-220, Cys-231, Cys-234, Cys-240, Cys-243, His-250, and His-254. Positions 542–636 (ASERELYIPS…KRKAENIASV (95 aa)) are ATG8 family protein-binding. Thr-586 is modified (phosphothreonine; by GSK3-alpha). Phosphoserine occurs at positions 590, 596, and 625. Residues 699–718 (EAVMEEEEDEEDEEEEDELK) are compositionally biased toward acidic residues. Disordered stretches follow at residues 699–728 (EAVM…SSAS), 750–792 (MYSS…QPQE), and 848–879 (VPDQ…HHGS). The tract at residues 727–738 (ASSEDYIIILPE) is ATG8 family protein-binding. Residues 913-957 (SEDQTAALMAHLFEMGFCDRQLNLRLLKKHNYNILQVVTELLQLN) form the UBA domain.

As to quaternary structure, homooligomer and heterooligomer. Interacts with TRIM55. Interacts with titin/TTN. Interacts with RNF29, USP8, MAP1LC3A, MAP1LC3B, MAP1LC3C, GABARAP, GABARAPL1 and GABARAPL2. Binds to ubiquitin and ubiquitinated proteins. Interacts with SQSTM1. Interacts with TAX1BP1. Interacts with IRF3; this interaction mediates autophagic degradation of IRF3. Interacts with IL12A and IL12B. In terms of assembly, (Microbial infection) Interacts with Influenza A virus protein PB1; this interaction promotes NBR1-mediated selective autophagic degradation of MAVS. Post-translationally, (Microbial infection) Cleaved by S.pyogenes SpeB protease; leading to its degradation. Degradation by SpeB prevents autophagy, promoting to S.pyogenes intracellular replication. In terms of processing, phosphorylated by GSK3A; this phosphorylation inhibits NBR1 involvement in the formation of ubiquitinated protein aggregates.

The protein resides in the cytoplasm. The protein localises to the cytoplasmic vesicle. Its subcellular location is the autophagosome. It is found in the lysosome. It localises to the myofibril. The protein resides in the sarcomere. The protein localises to the m line. In terms of biological role, ubiquitin-binding autophagy adapter that participates in different processes including host defense or intracellular homeostasis. Possesses a double function during the selective autophagy by acting as a shuttle bringing ubiquitinated proteins to autophagosomes and also by participating in the formation of protein aggregates. Plays a role in the regulation of the innate immune response by modulating type I interferon production and targeting ubiquitinated IRF3 for autophagic degradation. In response to oxidative stress, promotes an increase in SQSTM1 levels, phosphorylation, and body formation by preventing its autophagic degradation. In turn, activates the KEAP1-NRF2/NFE2L2 antioxidant pathway. Also plays non-autophagy role by mediating the shuttle of IL-12 to late endosome for subsequent secretion. This Homo sapiens (Human) protein is Next to BRCA1 gene 1 protein (NBR1).